A 304-amino-acid chain; its full sequence is Putative ankyrin repeat protein R602 (304 aa).

ANK repeat units follow at residues 82–117 (LIRY…DITF), 118–146 (NDNF…DVHA), 147–176 (DNEF…DPFC), 178–206 (DNIV…DINA), 207–236 (GNNY…SIND), and 238–266 (SPND…DIST).

The protein is Putative ankyrin repeat protein R602 of Acanthamoeba polyphaga (Amoeba).